Consider the following 117-residue polypeptide: Immunoglobulin kappa variable 1-9 (117 aa).

A signal peptide spans M1–C22. A framework-1 region spans residues D23 to C45. The 94-residue stretch at I24–P117 folds into the Ig-like domain. Residues C45 and C110 are joined by a disulfide bond. Residues R46–A56 form a complementarity-determining-1 region. Residues W57–Y71 are framework-2. The complementarity-determining-2 stretch occupies residues A72–S78. Residues G79 to C110 are framework-3. Positions Q111–P117 are complementarity-determining-3.

In terms of assembly, immunoglobulins are composed of two identical heavy chains and two identical light chains; disulfide-linked.

It is found in the secreted. The protein resides in the cell membrane. Functionally, v region of the variable domain of immunoglobulin light chains that participates in the antigen recognition. Immunoglobulins, also known as antibodies, are membrane-bound or secreted glycoproteins produced by B lymphocytes. In the recognition phase of humoral immunity, the membrane-bound immunoglobulins serve as receptors which, upon binding of a specific antigen, trigger the clonal expansion and differentiation of B lymphocytes into immunoglobulins-secreting plasma cells. Secreted immunoglobulins mediate the effector phase of humoral immunity, which results in the elimination of bound antigens. The antigen binding site is formed by the variable domain of one heavy chain, together with that of its associated light chain. Thus, each immunoglobulin has two antigen binding sites with remarkable affinity for a particular antigen. The variable domains are assembled by a process called V-(D)-J rearrangement and can then be subjected to somatic hypermutations which, after exposure to antigen and selection, allow affinity maturation for a particular antigen. The sequence is that of Immunoglobulin kappa variable 1-9 from Homo sapiens (Human).